A 284-amino-acid polypeptide reads, in one-letter code: 4-diphosphocytidyl-2-C-methyl-D-erythritol kinase (284 aa).

K14 is a catalytic residue. ATP is bound at residue 98 to 108; sequence PMGGGLGGGSS. D140 is an active-site residue.

It belongs to the GHMP kinase family. IspE subfamily.

It carries out the reaction 4-CDP-2-C-methyl-D-erythritol + ATP = 4-CDP-2-C-methyl-D-erythritol 2-phosphate + ADP + H(+). It functions in the pathway isoprenoid biosynthesis; isopentenyl diphosphate biosynthesis via DXP pathway; isopentenyl diphosphate from 1-deoxy-D-xylulose 5-phosphate: step 3/6. Functionally, catalyzes the phosphorylation of the position 2 hydroxy group of 4-diphosphocytidyl-2C-methyl-D-erythritol. This is 4-diphosphocytidyl-2-C-methyl-D-erythritol kinase from Shewanella piezotolerans (strain WP3 / JCM 13877).